Consider the following 181-residue polypeptide: CDP-diacylglycerol--glycerol-3-phosphate 3-phosphatidyltransferase (181 aa).

A run of 4 helical transmembrane segments spans residues 8–28 (PNYL…TFYI), 35–55 (MLGA…GYIA), 64–84 (FGKM…IIML), and 148–168 (IIYL…LTII).

Belongs to the CDP-alcohol phosphatidyltransferase class-I family.

It is found in the cell membrane. The catalysed reaction is a CDP-1,2-diacyl-sn-glycerol + sn-glycerol 3-phosphate = a 1,2-diacyl-sn-glycero-3-phospho-(1'-sn-glycero-3'-phosphate) + CMP + H(+). It functions in the pathway phospholipid metabolism; phosphatidylglycerol biosynthesis; phosphatidylglycerol from CDP-diacylglycerol: step 1/2. Its function is as follows. This protein catalyzes the committed step to the synthesis of the acidic phospholipids. The polypeptide is CDP-diacylglycerol--glycerol-3-phosphate 3-phosphatidyltransferase (pgsA) (Rickettsia bellii (strain RML369-C)).